We begin with the raw amino-acid sequence, 475 residues long: Membrane-bound lytic murein transglycosylase F (475 aa).

Positions 1–15 (MKKLLLILCCITLLA) are cleaved as a signal peptide. The tract at residues 16 to 258 (ACQKVVVEQE…HLNEKYFAHV (243 aa)) is non-LT domain. The interval 259-475 (KRFDYVDTRA…KTEAAQPQQP (217 aa)) is LT domain. E303 is a catalytic residue.

It in the N-terminal section; belongs to the bacterial solute-binding protein 3 family. In the C-terminal section; belongs to the transglycosylase Slt family.

It is found in the cell outer membrane. The enzyme catalyses Exolytic cleavage of the (1-&gt;4)-beta-glycosidic linkage between N-acetylmuramic acid (MurNAc) and N-acetylglucosamine (GlcNAc) residues in peptidoglycan, from either the reducing or the non-reducing ends of the peptidoglycan chains, with concomitant formation of a 1,6-anhydrobond in the MurNAc residue.. Functionally, murein-degrading enzyme that degrades murein glycan strands and insoluble, high-molecular weight murein sacculi, with the concomitant formation of a 1,6-anhydromuramoyl product. Lytic transglycosylases (LTs) play an integral role in the metabolism of the peptidoglycan (PG) sacculus. Their lytic action creates space within the PG sacculus to allow for its expansion as well as for the insertion of various structures such as secretion systems and flagella. The sequence is that of Membrane-bound lytic murein transglycosylase F from Shewanella halifaxensis (strain HAW-EB4).